Here is a 1072-residue protein sequence, read N- to C-terminus: DNA-directed RNA polymerase subunit beta (1072 aa).

The protein belongs to the RNA polymerase beta chain family. In plastids the minimal PEP RNA polymerase catalytic core is composed of four subunits: alpha, beta, beta', and beta''. When a (nuclear-encoded) sigma factor is associated with the core the holoenzyme is formed, which can initiate transcription.

It localises to the plastid. Its subcellular location is the chloroplast. It catalyses the reaction RNA(n) + a ribonucleoside 5'-triphosphate = RNA(n+1) + diphosphate. Its function is as follows. DNA-dependent RNA polymerase catalyzes the transcription of DNA into RNA using the four ribonucleoside triphosphates as substrates. The sequence is that of DNA-directed RNA polymerase subunit beta from Nasturtium officinale (Watercress).